Reading from the N-terminus, the 101-residue chain is Putative UPF0377 protein YBL108W (101 aa).

It belongs to the UPF0377 family.

This chain is Putative UPF0377 protein YBL108W, found in Saccharomyces cerevisiae (strain ATCC 204508 / S288c) (Baker's yeast).